A 399-amino-acid polypeptide reads, in one-letter code: 26S proteasome regulatory subunit 10B homolog A (399 aa).

Threonine 2 carries the post-translational modification N-acetylthreonine. Residue 180 to 187 (GPPGTGKT) coordinates ATP. Lysine 203 is covalently cross-linked (Glycyl lysine isopeptide (Lys-Gly) (interchain with G-Cter in ubiquitin)).

This sequence belongs to the AAA ATPase family. In terms of assembly, component of the 19S regulatory particle (RP/PA700) base subcomplex of the 26S proteasome. The 26S proteasome is composed of a core protease (CP), known as the 20S proteasome, capped at one or both ends by the 19S regulatory particle (RP/PA700). The RP/PA700 complex is composed of at least 17 different subunits in two subcomplexes, the base and the lid, which form the portions proximal and distal to the 20S proteolytic core, respectively.

The protein resides in the cytoplasm. The protein localises to the nucleus. Its function is as follows. The 26S proteasome is involved in the ATP-dependent degradation of ubiquitinated proteins. The regulatory (or ATPase) complex confers ATP dependency and substrate specificity to the 26S complex. The protein is 26S proteasome regulatory subunit 10B homolog A (RPT4A) of Arabidopsis thaliana (Mouse-ear cress).